The primary structure comprises 442 residues: MKKVFIRTFGCQMNEYDSDKMLAVLAEEHGGIEQVTQADEADIILFNTCSVREKAQEKVFSDLGRVRPLKEKNPGLIIGVAGCVASQEGENIIKRAPYVDVVFGPQTLHRLPKMIVDKETSGLSQVDISFPEIEKFDHLPPARVEGGAAFVSIMEGCSKYCSFCVVPYTRGEEFSRPLNDVLTEIANLAQQGVKEINLLGQNVNAYRGEMDDGEICDFATLLRIVHEIPGIERMRFTTSHPREFTDSIIECYRDLPKLVSHLHLPIQSGSDRVLSAMKRGYTALEYKSIIRKLRAIRPDLCLSSDFIVGFPGETEREFEQTLKLVKDIAFDLSFVFIYSPRPGTPAANLPDDTPHEEKVRRLEALNEVIEAETARINQTMVGTVQRCLVEGISKKDPDQLQARTANNRVVNFTGTPDMINQMIDLEITEAYTFSLRGKVVEA.

The 119-residue stretch at 2–120 (KKVFIRTFGC…LPKMIVDKET (119 aa)) folds into the MTTase N-terminal domain. The [4Fe-4S] cluster site is built by Cys11, Cys49, Cys83, Cys157, Cys161, and Cys164. Residues 143-375 (RVEGGAAFVS…NEVIEAETAR (233 aa)) enclose the Radical SAM core domain. A TRAM domain is found at 378-441 (QTMVGTVQRC…TFSLRGKVVE (64 aa)).

It belongs to the methylthiotransferase family. MiaB subfamily. Monomer. [4Fe-4S] cluster serves as cofactor.

Its subcellular location is the cytoplasm. It catalyses the reaction N(6)-dimethylallyladenosine(37) in tRNA + (sulfur carrier)-SH + AH2 + 2 S-adenosyl-L-methionine = 2-methylsulfanyl-N(6)-dimethylallyladenosine(37) in tRNA + (sulfur carrier)-H + 5'-deoxyadenosine + L-methionine + A + S-adenosyl-L-homocysteine + 2 H(+). Functionally, catalyzes the methylthiolation of N6-(dimethylallyl)adenosine (i(6)A), leading to the formation of 2-methylthio-N6-(dimethylallyl)adenosine (ms(2)i(6)A) at position 37 in tRNAs that read codons beginning with uridine. The sequence is that of tRNA-2-methylthio-N(6)-dimethylallyladenosine synthase from Neisseria meningitidis serogroup B (strain ATCC BAA-335 / MC58).